We begin with the raw amino-acid sequence, 501 residues long: Protein DETOXIFICATION 37 (501 aa).

12 consecutive transmembrane segments (helical) span residues 44–64, 84–104, 134–154, 163–183, 200–220, 222–242, 280–300, 310–330, 352–372, 396–416, 422–442, and 453–473; these read MMIE…VYVI, LAAA…LLLG, VVLI…NPIL, VATL…AYAV, SAYI…IAVY, LGYG…IIVV, AVML…AGLL, LAIC…FNAA, VVTT…VLSW, FLAI…VAVG, FVAY…GFVL, and IWTG…IVTL.

It belongs to the multi antimicrobial extrusion (MATE) (TC 2.A.66.1) family.

It is found in the membrane. This Arabidopsis thaliana (Mouse-ear cress) protein is Protein DETOXIFICATION 37.